A 451-amino-acid polypeptide reads, in one-letter code: UPF0210 protein LMOf2365_0563 (451 aa).

It belongs to the UPF0210 family. In terms of assembly, homodimer.

This is UPF0210 protein LMOf2365_0563 from Listeria monocytogenes serotype 4b (strain F2365).